We begin with the raw amino-acid sequence, 79 residues long: Putative Fis-like DNA-binding protein (79 aa).

The segment at residues 55–74 (QSKASVMLGLNRNTLRKKLI) is a DNA-binding region (H-T-H motif).

This sequence belongs to the transcriptional regulatory Fis family.

The sequence is that of Putative Fis-like DNA-binding protein from Neisseria meningitidis serogroup A / serotype 4A (strain DSM 15465 / Z2491).